A 589-amino-acid chain; its full sequence is Netrin-G2 (589 aa).

The first 17 residues, 1–17 (MLRLLALFLHCLPLVSG), serve as a signal peptide directing secretion. Intrachain disulfides connect C22/C39, C61/C81, and C69/C77. Positions 35-286 (EFYACQPKVM…AISNIEVIGR (252 aa)) constitute a Laminin N-terminal domain. The segment at 69-88 (CSHENPYLCSNECDASNPDL) is NGL discriminant loop I. N-linked (GlcNAc...) asparagine glycans are attached at residues N122 and N128. Cysteines 171 and 195 form a disulfide. Residues 201 to 203 (RWA) are NGL discriminant loop II. Positions 264-267 (TYVQ) are NGL discriminant loop III. 15 disulfides stabilise this stretch: C287-C296, C289-C305, C307-C316, C319-C344, C413-C422, C415-C433, C436-C445, C448-C466, C469-C481, C471-C487, C489-C498, C501-C511, C516-C529, C523-C535, and C537-C546. Laminin EGF-like domains follow at residues 287–346 (CKCN…ACAA), 413–468 (CECY…VCIE), and 469–513 (CNCN…GCYP). An N-linked (GlcNAc...) asparagine glycan is attached at N310. N-linked (GlcNAc...) asparagine glycosylation is present at N455. The N-linked (GlcNAc...) asparagine glycan is linked to N482. G566 is lipidated: GPI-anchor amidated glycine. Positions 567-589 (IVPRPDTLLGCLLLLGLAARLAC) are cleaved as a propeptide — removed in mature form.

Interacts with LRRC4. Post-translationally, N-glycosylated. As to expression, expression is restricted primarily to neurons of the CNS, particularly in the cerebral cortex, habenular nucleus and superior colliculus. Low levels in lung, kidney, heart and spleen.

Its subcellular location is the cell membrane. Its function is as follows. Involved in controlling patterning and neuronal circuit formation at the laminar, cellular, subcellular and synaptic levels. Promotes neurite outgrowth of both axons and dendrites. This is Netrin-G2 (Ntng2) from Mus musculus (Mouse).